We begin with the raw amino-acid sequence, 201 residues long: Cell division protein SepF (201 aa).

Positions 27–38 (VQERTSVQRDSR) are enriched in basic and acidic residues. The interval 27–99 (VQERTSVQRD…PRVQNKDSVR (73 aa)) is disordered. Residues 43-54 (QEASQRSHMTNS) show a composition bias toward polar residues. The segment covering 72-81 (NRQERQRVQR) has biased composition (basic and acidic residues). Positions 83–92 (NAYQQATPRV) are enriched in polar residues.

This sequence belongs to the SepF family. Homodimer. Interacts with FtsZ.

The protein localises to the cytoplasm. In terms of biological role, cell division protein that is part of the divisome complex and is recruited early to the Z-ring. Probably stimulates Z-ring formation, perhaps through the cross-linking of FtsZ protofilaments. Its function overlaps with FtsA. The protein is Cell division protein SepF of Streptococcus agalactiae serotype V (strain ATCC BAA-611 / 2603 V/R).